A 76-amino-acid polypeptide reads, in one-letter code: Small ribosomal subunit protein bS18 (76 aa).

The protein belongs to the bacterial ribosomal protein bS18 family. In terms of assembly, part of the 30S ribosomal subunit. Forms a tight heterodimer with protein bS6.

Functionally, binds as a heterodimer with protein bS6 to the central domain of the 16S rRNA, where it helps stabilize the platform of the 30S subunit. In Tolumonas auensis (strain DSM 9187 / NBRC 110442 / TA 4), this protein is Small ribosomal subunit protein bS18.